The following is a 288-amino-acid chain: NAD kinase (288 aa).

Aspartate 70 serves as the catalytic Proton acceptor. NAD(+) contacts are provided by residues 70–71 (DG), 144–145 (ND), arginine 155, lysine 172, aspartate 174, 185–190 (TGYSLS), and glutamine 245.

The protein belongs to the NAD kinase family. A divalent metal cation is required as a cofactor.

It localises to the cytoplasm. The catalysed reaction is NAD(+) + ATP = ADP + NADP(+) + H(+). Involved in the regulation of the intracellular balance of NAD and NADP, and is a key enzyme in the biosynthesis of NADP. Catalyzes specifically the phosphorylation on 2'-hydroxyl of the adenosine moiety of NAD to yield NADP. This chain is NAD kinase, found in Citrifermentans bemidjiense (strain ATCC BAA-1014 / DSM 16622 / JCM 12645 / Bem) (Geobacter bemidjiensis).